Consider the following 124-residue polypeptide: MINRRMKTGFVFHLLLLLLPLVVLVTSSRRTADDVTLHIIPQHQGAALPDGFYIYQRLNEHGIGIKSITPEDDSIIVRLSSPEQSRAASEVLKSALPQASVIARQPDAIPIWRQKLSQQPFKLG.

The Cytoplasmic segment spans residues 1–7; that stretch reads MINRRMK. A helical transmembrane segment spans residues 8–28; that stretch reads TGFVFHLLLLLLPLVVLVTSS. The Periplasmic portion of the chain corresponds to 29 to 124; that stretch reads RRTADDVTLH…KLSQQPFKLG (96 aa).

This sequence belongs to the MzrA family. In terms of assembly, interacts with EnvZ.

It localises to the cell inner membrane. In terms of biological role, modulates the activity of the EnvZ/OmpR two-component regulatory system, probably by directly modulating EnvZ enzymatic activity and increasing stability of phosphorylated OmpR. This Musicola paradisiaca (strain Ech703) (Dickeya paradisiaca) protein is Modulator protein MzrA.